The chain runs to 184 residues: Putative manganese efflux pump MntP (184 aa).

6 helical membrane passes run 3 to 23, 36 to 56, 65 to 85, 103 to 123, 126 to 146, and 163 to 183; these read LLSM…ISVS, ALIS…LGWV, VSAL…LKMI, LLVL…SFAL, ISIW…SLAG, and ALGG…NVSF.

The protein belongs to the MntP (TC 9.B.29) family.

The protein localises to the cell membrane. Functionally, probably functions as a manganese efflux pump. The chain is Putative manganese efflux pump MntP from Methanothermobacter thermautotrophicus (strain ATCC 29096 / DSM 1053 / JCM 10044 / NBRC 100330 / Delta H) (Methanobacterium thermoautotrophicum).